The sequence spans 316 residues: Acetyl-coenzyme A carboxylase carboxyl transferase subunit beta, chloroplastic (316 aa).

The CoA carboxyltransferase N-terminal domain occupies 47-316; sequence LWTRCDNCEN…CKKFQNSFFK (270 aa). Zn(2+) is bound by residues Cys-51, Cys-54, Cys-70, and Cys-73. The C4-type zinc finger occupies 51–73; the sequence is CDNCENMLYVRFLRQNKRICEEC.

The protein belongs to the AccD/PCCB family. As to quaternary structure, acetyl-CoA carboxylase is a heterohexamer composed of biotin carboxyl carrier protein, biotin carboxylase and 2 subunits each of ACCase subunit alpha and ACCase plastid-coded subunit beta (accD). Requires Zn(2+) as cofactor.

It localises to the plastid. Its subcellular location is the chloroplast stroma. The catalysed reaction is N(6)-carboxybiotinyl-L-lysyl-[protein] + acetyl-CoA = N(6)-biotinyl-L-lysyl-[protein] + malonyl-CoA. It functions in the pathway lipid metabolism; malonyl-CoA biosynthesis; malonyl-CoA from acetyl-CoA: step 1/1. Functionally, component of the acetyl coenzyme A carboxylase (ACC) complex. Biotin carboxylase (BC) catalyzes the carboxylation of biotin on its carrier protein (BCCP) and then the CO(2) group is transferred by the transcarboxylase to acetyl-CoA to form malonyl-CoA. The sequence is that of Acetyl-coenzyme A carboxylase carboxyl transferase subunit beta, chloroplastic from Marchantia polymorpha (Common liverwort).